The following is a 312-amino-acid chain: Beta-ketoacyl-[acyl-carrier-protein] synthase III (312 aa).

Residues cysteine 112 and histidine 237 contribute to the active site. The segment at 238–242 (QANIR) is ACP-binding. Asparagine 267 is a catalytic residue.

Belongs to the thiolase-like superfamily. FabH family. In terms of assembly, homodimer.

The protein localises to the cytoplasm. The catalysed reaction is malonyl-[ACP] + acetyl-CoA + H(+) = 3-oxobutanoyl-[ACP] + CO2 + CoA. Its pathway is lipid metabolism; fatty acid biosynthesis. In terms of biological role, catalyzes the condensation reaction of fatty acid synthesis by the addition to an acyl acceptor of two carbons from malonyl-ACP. Catalyzes the first condensation reaction which initiates fatty acid synthesis and may therefore play a role in governing the total rate of fatty acid production. Possesses both acetoacetyl-ACP synthase and acetyl transacylase activities. Its substrate specificity determines the biosynthesis of branched-chain and/or straight-chain of fatty acids. The polypeptide is Beta-ketoacyl-[acyl-carrier-protein] synthase III (Listeria welshimeri serovar 6b (strain ATCC 35897 / DSM 20650 / CCUG 15529 / CIP 8149 / NCTC 11857 / SLCC 5334 / V8)).